The following is a 145-amino-acid chain: D-aminoacyl-tRNA deacylase (145 aa).

Residues 137–138 (GP) carry the Gly-cisPro motif, important for rejection of L-amino acids motif.

This sequence belongs to the DTD family. As to quaternary structure, homodimer.

Its subcellular location is the cytoplasm. It catalyses the reaction glycyl-tRNA(Ala) + H2O = tRNA(Ala) + glycine + H(+). The enzyme catalyses a D-aminoacyl-tRNA + H2O = a tRNA + a D-alpha-amino acid + H(+). In terms of biological role, an aminoacyl-tRNA editing enzyme that deacylates mischarged D-aminoacyl-tRNAs. Also deacylates mischarged glycyl-tRNA(Ala), protecting cells against glycine mischarging by AlaRS. Acts via tRNA-based rather than protein-based catalysis; rejects L-amino acids rather than detecting D-amino acids in the active site. By recycling D-aminoacyl-tRNA to D-amino acids and free tRNA molecules, this enzyme counteracts the toxicity associated with the formation of D-aminoacyl-tRNA entities in vivo and helps enforce protein L-homochirality. This chain is D-aminoacyl-tRNA deacylase, found in Escherichia coli O81 (strain ED1a).